The sequence spans 183 residues: DELTA-miturgitoxin-Cp1a (183 aa).

The signal sequence occupies residues 1–20 (MKFSLFFSVFFLAVLHACLS). Residues 21-47 (ESEIDLEDEEHFMSSDSFLSEIQDESR) constitute a propeptide that is removed on maturation. Residues 44–47 (DESR) carry the Processing quadruplet motif motif. Cystine bridges form between Cys51–Cys66, Cys58–Cys75, Cys65–Cys88, Cys77–Cys86, Cys115–Cys130, Cys122–Cys139, Cys129–Cys157, and Cys141–Cys155. Domain repeat units follow at residues 51–77 (CIER…KCTC) and 115–141 (CVPK…QCKC). The segment at 51-141 (CIERNKECTN…GGIFKYQCKC (91 aa)) is 2 X approximate repeats with cysteine pattern C-C-CC-C-C. Residues 164–177 (QAIEGALRIAKKLI) form a predicted alpha-helix region. Trp181 carries the tryptophan amide modification.

Belongs to the neurotoxin 19 (CSTX) family. Double-CSTX subfamily. In terms of processing, cleavage of the propeptide depends on the processing quadruplet motif (XXXR, with at least one of X being E). As to expression, expressed by the venom gland.

The protein localises to the secreted. Its subcellular location is the target cell membrane. Functionally, spider venom toxin that exhibits cytolytic activity by forming an alpha-helix across the membrane. Lethal to insect larvae. Causes instant paralysis and death in the larvae of the flesh fly (S.carnaria) at doses of 20 ug/g, at doses of less than 10 ug/g causes reversible paralysis. Has cytolytic activity against insect Sf9 cells. Causes stable and irreversible depolarization of fly muscle fibers, leading to contracture at higher toxin concentrations. Destabilizes membranes. The chain is DELTA-miturgitoxin-Cp1a from Cheiracanthium punctorium (Yellow sac spider).